Here is a 2648-residue protein sequence, read N- to C-terminus: E3 ubiquitin-protein ligase hecd-1 (2648 aa).

ANK repeat units lie at residues 374–403 (VGQS…DVNK) and 405–434 (HKSS…NPDL). Basic and acidic residues predominate over residues 433 to 455 (DLRDEDGKTALDKARERSDDDHN). Disordered stretches follow at residues 433–494 (DLRD…ELPN), 645–714 (PMEI…KATA), and 1376–1400 (DPPK…ALPP). Composition is skewed to polar residues over residues 478 to 489 (ASTSKQPGTSTK), 652 to 661 (NQPSSSTAVP), and 670 to 688 (TVPS…NPST). Composition is skewed to low complexity over residues 696–714 (SSTP…KATA) and 1383–1400 (PAGT…ALPP). The MIB/HERC2 domain occupies 1438–1510 (RSRGSYKISE…NFDIERVTST (73 aa)). Disordered regions lie at residues 1538–1562 (YTPK…GSSR), 1575–1629 (KNTT…SLQH), 1652–1796 (NQEP…LLGG), and 1811–1836 (ESLS…GKKP). Composition is skewed to low complexity over residues 1543–1562 (TGGP…GSSR) and 1575–1586 (KNTTPAGTPSSG). Polar residues predominate over residues 1610 to 1629 (TSGPSVASTGQAASAESLQH). The span at 1653–1666 (QEPEDEPMGGEESD) shows a compositional bias: acidic residues. The span at 1667-1696 (SAASMRSAASSNSQMSMGSSSQQQQQQDSD) shows a compositional bias: low complexity. Acidic residues-rich tracts occupy residues 1736–1746 (TDGDADADETN) and 1756–1783 (DAME…DESS). The segment covering 1812–1823 (SLSDASSSAKDA) has biased composition (low complexity). The 409-residue stretch at 2240–2648 (FHADRKAVLE…AINEKGFHLN (409 aa)) folds into the HECT domain. Cys-2617 (glycyl thioester intermediate) is an active-site residue.

The protein belongs to the UPL family. K-HECT subfamily. Expressed in most tissues, including hypodermis, muscle, intestine, vulva, and neurons.

It catalyses the reaction S-ubiquitinyl-[E2 ubiquitin-conjugating enzyme]-L-cysteine + [acceptor protein]-L-lysine = [E2 ubiquitin-conjugating enzyme]-L-cysteine + N(6)-ubiquitinyl-[acceptor protein]-L-lysine.. It participates in protein modification; protein ubiquitination. In terms of biological role, E3 ubiquitin-protein ligase which accepts ubiquitin from an E2 ubiquitin-conjugating enzyme in the form of a thioester and then directly transfers the ubiquitin to targeted substrates. Involved in the ubiquitination and proteasomal-mediated degradation of cytoplasmic and mitochondrial proteins. Positively regulates lin-12 activity in the anchor cell (AC)/vulval precursor (VU) cell fate decision. Negatively regulates glp-1 activity in germline proliferation. May play a role in the formation of fibrous organelles, a hemidesmosome-like structure attaching muscles to the epidermis. Regulates germline DNA double-strand-break repair and apoptosis in response to DNA damage by recruiting E4 ubiquitin-protein ligase ufd-2 to DNA repair foci. This chain is E3 ubiquitin-protein ligase hecd-1, found in Caenorhabditis elegans.